We begin with the raw amino-acid sequence, 428 residues long: Cholecystokinin receptor type A (428 aa).

The Extracellular portion of the chain corresponds to 1–41; it reads MDVVDSLLVNGSNITPPCELGLENETLFCLDQPRPSKEWQP. 2 N-linked (GlcNAc...) asparagine glycosylation sites follow: Asn10 and Asn24. Cys18 and Cys29 form a disulfide bridge. A helical transmembrane segment spans residues 42 to 67; it reads AVQILLYSLIFLLSVLGNTLVITVLI. The Cytoplasmic segment spans residues 68–77; it reads RNKRMRTVTN. The chain crosses the membrane as a helical span at residues 78–104; the sequence is IFLLSLAVSDLMLCLFCMPFNLIPNLL. The Extracellular portion of the chain corresponds to 105 to 115; sequence KDFIFGSAVCK. Cys114 and Cys196 are joined by a disulfide. Residues 116–137 traverse the membrane as a helical segment; the sequence is TTTYFMGTSVSVSTFNLVAISL. Residues 138 to 157 lie on the Cytoplasmic side of the membrane; that stretch reads ERYGAICKPLQSRVWQTKSH. Residues 158–178 form a helical membrane-spanning segment; it reads ALKVIAATWCLSFTIMTPYPI. Topologically, residues 179–210 are extracellular; sequence YSNLVPFTKNNNQTANMCRFLLPNDVMQQSWH. A glycan (N-linked (GlcNAc...) asparagine) is linked at Asn190. A helical membrane pass occupies residues 211-234; sequence TFLLLILFLIPGIVMMVAYGLISL. At 235 to 313 the chain is on the cytoplasmic side; it reads ELYQGIKFEA…NLMAKKRVIR (79 aa). Positions 248-272 are disordered; the sequence is KSAKERKPSTTSSGKYEDSDGCYLQ. The chain crosses the membrane as a helical span at residues 314-334; it reads MLIVIVVLFFLCWMPIFSANA. At 335–349 the chain is on the extracellular side; sequence WRAYDTASAERRLSG. Residues 350–373 traverse the membrane as a helical segment; it reads TPISFILLLSYTSSCVNPIIYCFM. Over 374–428 the chain is Cytoplasmic; it reads NKRFRLGFMATFPCCPNPGPPGARGEVGEEEEGGTTGASLSRFSYSHMSASVPPQ. Cys387 is lipidated: S-palmitoyl cysteine. Residues 394 to 428 are disordered; it reads PGARGEVGEEEEGGTTGASLSRFSYSHMSASVPPQ. The segment covering 411-422 has biased composition (polar residues); it reads ASLSRFSYSHMS.

Belongs to the G-protein coupled receptor 1 family.

The protein localises to the cell membrane. Its function is as follows. Receptor for cholecystokinin. Mediates pancreatic growth and enzyme secretion, smooth muscle contraction of the gall bladder and stomach. Has a 1000-fold higher affinity for CCK rather than for gastrin. It modulates feeding and dopamine-induced behavior in the central and peripheral nervous system. This receptor mediates its action by association with G proteins that activate a phosphatidylinositol-calcium second messenger system. The polypeptide is Cholecystokinin receptor type A (CCKAR) (Homo sapiens (Human)).